Here is a 251-residue protein sequence, read N- to C-terminus: Imidazole glycerol phosphate synthase subunit HisF (251 aa).

Catalysis depends on residues D11 and D130.

This sequence belongs to the HisA/HisF family. Heterodimer of HisH and HisF.

It localises to the cytoplasm. The enzyme catalyses 5-[(5-phospho-1-deoxy-D-ribulos-1-ylimino)methylamino]-1-(5-phospho-beta-D-ribosyl)imidazole-4-carboxamide + L-glutamine = D-erythro-1-(imidazol-4-yl)glycerol 3-phosphate + 5-amino-1-(5-phospho-beta-D-ribosyl)imidazole-4-carboxamide + L-glutamate + H(+). The protein operates within amino-acid biosynthesis; L-histidine biosynthesis; L-histidine from 5-phospho-alpha-D-ribose 1-diphosphate: step 5/9. Functionally, IGPS catalyzes the conversion of PRFAR and glutamine to IGP, AICAR and glutamate. The HisF subunit catalyzes the cyclization activity that produces IGP and AICAR from PRFAR using the ammonia provided by the HisH subunit. This is Imidazole glycerol phosphate synthase subunit HisF from Prosthecochloris aestuarii (strain DSM 271 / SK 413).